Consider the following 149-residue polypeptide: Arginine regulator (149 aa).

It belongs to the ArgR family.

The protein localises to the cytoplasm. It participates in amino-acid degradation; L-arginine degradation via ADI pathway. Regulates the transcription of the arc operon, involved in arginine catabolism. This Bacillus thuringiensis subsp. konkukian (strain 97-27) protein is Arginine regulator (argR1).